The sequence spans 275 residues: Tryptase (275 aa).

A signal peptide spans 1–20 (MLNLLVLALPLLVSLVHTAP). Residues 21–30 (APGQALERAG) constitute a propeptide, activation peptide. Residues 31–272 (IVGGKEAPGH…YLDWIHQCIP (242 aa)) form the Peptidase S1 domain. Cys59 and Cys75 are oxidised to a cystine. Active-site charge relay system residues include His74 and Asp121. An N-linked (GlcNAc...) asparagine glycan is attached at Asn132. Intrachain disulfides connect Cys155-Cys230, Cys188-Cys211, and Cys220-Cys248. Catalysis depends on Ser224, which acts as the Charge relay system. The N-linked (GlcNAc...) asparagine glycan is linked to Asn233.

It belongs to the peptidase S1 family. Tryptase subfamily. In terms of assembly, homotetramer.

Its subcellular location is the secreted. The catalysed reaction is Preferential cleavage: Arg-|-Xaa, Lys-|-Xaa, but with more restricted specificity than trypsin.. Its function is as follows. Tryptase is the major neutral protease present in mast cells and is secreted upon the coupled activation-degranulation response of this cell type. In Sus scrofa (Pig), this protein is Tryptase (MCT7).